Consider the following 155-residue polypeptide: S-ribosylhomocysteine lyase (155 aa).

Fe cation is bound by residues H54, H58, and C122.

Belongs to the LuxS family. In terms of assembly, homodimer. Fe cation is required as a cofactor.

It carries out the reaction S-(5-deoxy-D-ribos-5-yl)-L-homocysteine = (S)-4,5-dihydroxypentane-2,3-dione + L-homocysteine. Involved in the synthesis of autoinducer 2 (AI-2) which is secreted by bacteria and is used to communicate both the cell density and the metabolic potential of the environment. The regulation of gene expression in response to changes in cell density is called quorum sensing. Catalyzes the transformation of S-ribosylhomocysteine (RHC) to homocysteine (HC) and 4,5-dihydroxy-2,3-pentadione (DPD). This is S-ribosylhomocysteine lyase from Deinococcus deserti (strain DSM 17065 / CIP 109153 / LMG 22923 / VCD115).